Reading from the N-terminus, the 404-residue chain is Double-stranded RNA-binding protein 5 (404 aa).

DRBM domains are found at residues 1-70 (MYKN…RLSL) and 87-155 (VYKN…SLKQ). 3 disordered regions span residues 195–236 (RRRR…STEE), 263–320 (GGRT…RRNA), and 336–362 (RRRP…FSDP). Residues 263-280 (GGRTQDTASPAPAAAAAS) are compositionally biased toward low complexity. Over residues 302–316 (AGAHAARRHAARQGG) the composition is skewed to basic residues.

Its function is as follows. Binds double-stranded RNA. The polypeptide is Double-stranded RNA-binding protein 5 (DRB5) (Oryza sativa subsp. japonica (Rice)).